The chain runs to 193 residues: dCTP deaminase, dUMP-forming (193 aa).

Residues 101–106, Asp119, 127–129, Gln148, Tyr162, and Gln174 contribute to the dCTP site; these read KSSLGR and TLE. Glu129 functions as the Proton donor/acceptor in the catalytic mechanism. The interval 162–184 is disordered; the sequence is YGSKGTGSHYQGQRGPTPSRSYE. The segment covering 167–183 has biased composition (polar residues); that stretch reads TGSHYQGQRGPTPSRSY.

The protein belongs to the dCTP deaminase family. As to quaternary structure, homotrimer.

The enzyme catalyses dCTP + 2 H2O = dUMP + NH4(+) + diphosphate. The protein operates within pyrimidine metabolism; dUMP biosynthesis; dUMP from dCTP: step 1/1. Bifunctional enzyme that catalyzes both the deamination of dCTP to dUTP and the hydrolysis of dUTP to dUMP without releasing the toxic dUTP intermediate. This chain is dCTP deaminase, dUMP-forming, found in Bifidobacterium longum (strain DJO10A).